The primary structure comprises 452 residues: Phosphoglucosamine mutase (452 aa).

Serine 103 functions as the Phosphoserine intermediate in the catalytic mechanism. Residues serine 103, aspartate 243, aspartate 245, and aspartate 247 each coordinate Mg(2+). A Phosphoserine modification is found at serine 103.

It belongs to the phosphohexose mutase family. Requires Mg(2+) as cofactor. Post-translationally, activated by phosphorylation.

It carries out the reaction alpha-D-glucosamine 1-phosphate = D-glucosamine 6-phosphate. In terms of biological role, catalyzes the conversion of glucosamine-6-phosphate to glucosamine-1-phosphate. In Lactobacillus acidophilus (strain ATCC 700396 / NCK56 / N2 / NCFM), this protein is Phosphoglucosamine mutase.